The primary structure comprises 37 residues: Large ribosomal subunit protein bL36 (37 aa).

It belongs to the bacterial ribosomal protein bL36 family.

The polypeptide is Large ribosomal subunit protein bL36 (Nostoc sp. (strain PCC 7120 / SAG 25.82 / UTEX 2576)).